Reading from the N-terminus, the 749-residue chain is Chitin synthase G (749 aa).

5 helical membrane-spanning segments follow: residues 40–60, 73–93, 421–441, 451–471, and 483–503; these read CVGE…PLPP, VLQW…WLFC, FMQN…ISII, PVGF…YFGI, and LMFI…IFTA. Residues 683-749 are disordered; that stretch reads IESGSGIPSG…RRYMQPEQMV (67 aa). The segment covering 697–718 has biased composition (polar residues); sequence LSSSVPQSGMQQSRAVPGNMSQ. Asn-715 carries N-linked (GlcNAc...) asparagine glycosylation. Over residues 728–742 the composition is skewed to basic residues; it reads YTKRPSRIPRQKRRY.

Belongs to the chitin synthase family. Class VI subfamily.

The protein resides in the cell membrane. It carries out the reaction [(1-&gt;4)-N-acetyl-beta-D-glucosaminyl](n) + UDP-N-acetyl-alpha-D-glucosamine = [(1-&gt;4)-N-acetyl-beta-D-glucosaminyl](n+1) + UDP + H(+). Polymerizes chitin, a structural polymer of the cell wall and septum, by transferring the sugar moiety of UDP-GlcNAc to the non-reducing end of the growing chitin polymer. Plays an important role in septal growth or maintenance. Mediates colony spore formation. The sequence is that of Chitin synthase G from Aspergillus niger (strain ATCC MYA-4892 / CBS 513.88 / FGSC A1513).